Consider the following 299-residue polypeptide: Small ribosomal subunit protein uS3 (299 aa).

Residues 39–107 form the KH type-2 domain; sequence VREYLKAKLK…PVAVNIEEVR (69 aa). Residues 214–299 form a disordered region; that stretch reads PVIKTDERED…AVAPGDAKGE (86 aa). The segment covering 217–248 has biased composition (basic and acidic residues); the sequence is KTDEREDDRRNRRGPRSDRPAGDRRPPSRDGA. Residues 257-282 are compositionally biased toward low complexity; sequence ADAGAAAPTDKPADGAAPAAADGPKA.

It belongs to the universal ribosomal protein uS3 family. As to quaternary structure, part of the 30S ribosomal subunit. Forms a tight complex with proteins S10 and S14.

In terms of biological role, binds the lower part of the 30S subunit head. Binds mRNA in the 70S ribosome, positioning it for translation. In Methylibium petroleiphilum (strain ATCC BAA-1232 / LMG 22953 / PM1), this protein is Small ribosomal subunit protein uS3.